The chain runs to 695 residues: Polyribonucleotide nucleotidyltransferase (695 aa).

Mg(2+)-binding residues include Asp-486 and Asp-492. The KH domain occupies Pro-553–Ile-612. The S1 motif domain occupies Gly-622 to Lys-690.

The protein belongs to the polyribonucleotide nucleotidyltransferase family. It depends on Mg(2+) as a cofactor.

The protein localises to the cytoplasm. It catalyses the reaction RNA(n+1) + phosphate = RNA(n) + a ribonucleoside 5'-diphosphate. Functionally, involved in mRNA degradation. Catalyzes the phosphorolysis of single-stranded polyribonucleotides processively in the 3'- to 5'-direction. The protein is Polyribonucleotide nucleotidyltransferase of Chlamydia trachomatis serovar L2 (strain ATCC VR-902B / DSM 19102 / 434/Bu).